We begin with the raw amino-acid sequence, 161 residues long: Phosphopantetheine adenylyltransferase (161 aa).

Residue Ser8 coordinates substrate. ATP-binding positions include Ser8 to Phe9 and His16. Positions 40, 72, and 86 each coordinate substrate. Residues Gly87 to Arg89, Glu97, and Phe122 to Ser128 contribute to the ATP site.

The protein belongs to the bacterial CoaD family. As to quaternary structure, homohexamer. Mg(2+) serves as cofactor.

The protein localises to the cytoplasm. The catalysed reaction is (R)-4'-phosphopantetheine + ATP + H(+) = 3'-dephospho-CoA + diphosphate. Its pathway is cofactor biosynthesis; coenzyme A biosynthesis; CoA from (R)-pantothenate: step 4/5. Functionally, reversibly transfers an adenylyl group from ATP to 4'-phosphopantetheine, yielding dephospho-CoA (dPCoA) and pyrophosphate. The polypeptide is Phosphopantetheine adenylyltransferase (Thermotoga neapolitana (strain ATCC 49049 / DSM 4359 / NBRC 107923 / NS-E)).